The primary structure comprises 101 residues: Small ribosomal subunit protein bS18c (101 aa).

The protein belongs to the bacterial ribosomal protein bS18 family. In terms of assembly, part of the 30S ribosomal subunit.

It localises to the plastid. It is found in the chloroplast. The protein is Small ribosomal subunit protein bS18c of Gossypium hirsutum (Upland cotton).